Here is a 245-residue protein sequence, read N- to C-terminus: MRIVYDDVRDLKAIVQALLKLVDEALFDIKPEGIQLVAIDKAHISLIKIELPKEMFKEYDVPEEFKFGFNTQYMSKLLKAAKRKEEIIIEADSPEVVKLTLSGALNRVFNVNNIEVLPPEVPEVNLEFDIKATINASGFKNAIGEIAEVADTLLISANEEKVIVKGEGENKVEVEFSKDTGSLADIEFNKESSSAYDVEYLNDIISLTKLSDYVKVAFAEQKPMQLEFNMEGGGKVTYLLAPKLS.

The protein belongs to the PCNA family. In terms of assembly, homotrimer. The subunits circularize to form a toroid; DNA passes through its center. Replication factor C (RFC) is required to load the toroid on the DNA.

Functionally, sliding clamp subunit that acts as a moving platform for DNA processing. Responsible for tethering the catalytic subunit of DNA polymerase and other proteins to DNA during high-speed replication. The polypeptide is DNA polymerase sliding clamp 1 (Sulfurisphaera ohwakuensis).